Here is a 369-residue protein sequence, read N- to C-terminus: Putative 2-aminoethylphosphonate import ATP-binding protein PhnT (369 aa).

In terms of domain architecture, ABC transporter spans 19–250 (IVLDSLRVAY…PPNRFAAEFL (232 aa)). An ATP-binding site is contributed by 51 to 58 (GPSGSGKT).

This sequence belongs to the ABC transporter superfamily. 2-aminoethylphosphonate importer (TC 3.A.1.11.5) family.

It is found in the cell inner membrane. Probably part of the PhnSTUV complex (TC 3.A.1.11.5) involved in 2-aminoethylphosphonate import. Probably responsible for energy coupling to the transport system. The polypeptide is Putative 2-aminoethylphosphonate import ATP-binding protein PhnT (phnT) (Salmonella typhimurium (strain LT2 / SGSC1412 / ATCC 700720)).